The chain runs to 389 residues: Flagellar P-ring protein (389 aa).

Residues 1–33 (MRPLVAARRRAAACCALAACMLALAFAPAAARA) form the signal peptide.

The protein belongs to the FlgI family. As to quaternary structure, the basal body constitutes a major portion of the flagellar organelle and consists of four rings (L,P,S, and M) mounted on a central rod.

It is found in the periplasm. It localises to the bacterial flagellum basal body. In terms of biological role, assembles around the rod to form the L-ring and probably protects the motor/basal body from shearing forces during rotation. The polypeptide is Flagellar P-ring protein (Burkholderia mallei (strain ATCC 23344)).